Here is a 153-residue protein sequence, read N- to C-terminus: Coiled-coil-helix-coiled-coil-helix domain-containing protein 2 (153 aa).

Disordered stretches follow at residues 1–51 (MPRG…AAPR) and 78–106 (HAIT…QGAQ). Low complexity predominate over residues 14–51 (PPASRAPQMRAAPRRAPAAQPPAAAAPSAVGSPAAAPR). In terms of domain architecture, CHCH spans 113-153 (FGPCSLEIKQFLECAQNQSDVKLCEGFNEVLRQCRIANGLM). 2 consecutive short sequence motifs (cx9C motif) follow at residues 116-126 (CSLEIKQFLEC) and 136-146 (CEGFNEVLRQC). Cystine bridges form between cysteine 116–cysteine 146 and cysteine 126–cysteine 136.

As to quaternary structure, interacts with RBPJ.

It is found in the nucleus. The protein localises to the mitochondrion. The protein resides in the mitochondrion intermembrane space. Functionally, transcription factor. Binds to the oxygen responsive element of COX4I2 and activates its transcription under hypoxia conditions (4% oxygen), as well as normoxia conditions (20% oxygen). This chain is Coiled-coil-helix-coiled-coil-helix domain-containing protein 2 (Chchd2), found in Mus musculus (Mouse).